Here is a 545-residue protein sequence, read N- to C-terminus: MAKDIKFNIDARDELKKGVDELANAVKVTLGPKGRNVIIEKKFGAPHITKDGVTVAKEVELADAFQNTGAQLVKSVASKTGDDAGDGTTTATVLAQSIVGVGLKNVTAGANPMDLKRGIDKAVAKVVESIKSQAEMVGDNYDKIEQVAAVSANNDPTIGKLIADAMRKVSKDGVITIEEAKGTDTTIGVVEGMQFDRGYLSAYFVTDTEKMECVMEHPYILIYDKKISNLKDFLPILEPAVQSGRPLLVIAEDVDSEALTTLVVNRLRSQLKICAVKAPGFGDRRKAMLEDIAVLTGGIVISEEKGLKLEQATLEMLGTCDKVTVSKDNTTIVNGAGAKENIQERINQIKAEIKNTTSDYDKEKLQERLAKLSGGVAVLYVGAASEVEMKEKKDRVDDALCATRAAIEEGIVPGGGVAYIRASEALEGLKGDNEDETTGIEIIKRAIEEPLRQIVANAGKEGAVVVQKVREGKGDFGYNARTDVYENLHAAGVVDPAKVTRVALENAASIAGMFLTTECVIVEKKEDKPEMPMGAPGMGGMGGMM.

ATP-binding positions include 29–32, lysine 50, 86–90, glycine 415, and aspartate 495; these read TLGP and DGTTT.

This sequence belongs to the chaperonin (HSP60) family. As to quaternary structure, forms a cylinder of 14 subunits composed of two heptameric rings stacked back-to-back. Interacts with the co-chaperonin GroES.

The protein localises to the cytoplasm. The catalysed reaction is ATP + H2O + a folded polypeptide = ADP + phosphate + an unfolded polypeptide.. In terms of biological role, together with its co-chaperonin GroES, plays an essential role in assisting protein folding. The GroEL-GroES system forms a nano-cage that allows encapsulation of the non-native substrate proteins and provides a physical environment optimized to promote and accelerate protein folding. This Phocaeicola vulgatus (strain ATCC 8482 / DSM 1447 / JCM 5826 / CCUG 4940 / NBRC 14291 / NCTC 11154) (Bacteroides vulgatus) protein is Chaperonin GroEL.